A 456-amino-acid polypeptide reads, in one-letter code: Protein FAM124B (456 aa).

The disordered stretch occupies residues 262 to 313 (NGCLRGDTHPQDSSLNSVSTQRTLEPRSRRRSRSRRFKVHSLELPQPSGSWE). Polar residues predominate over residues 272–284 (QDSSLNSVSTQRT). Over residues 289-300 (SRRRSRSRRFKV) the composition is skewed to basic residues.

This sequence belongs to the FAM124 family. In terms of assembly, interacts with CHD7 and CHD8. In terms of tissue distribution, expressed strongly in lung, at slightly lower levels in heart, kidney, brain and testis, and weakly in liver (at protein level). In brain, highly expressed in cortex, hippocampus, dentate gyrus, caudate putamen and cerebellum (at protein level).

The protein resides in the nucleus. The protein is Protein FAM124B (Fam124b) of Mus musculus (Mouse).